The following is a 676-amino-acid chain: Phosphatidylinositol-3,5-bisphosphate 3-phosphatase MTMR6 (676 aa).

The 377-residue stretch at 125–501 folds into the Myotubularin phosphatase domain; sequence GWRRLDWNSE…ARFTVWTAMY (377 aa). Residues N249, N274, and I275 each contribute to the a 1,2-diacyl-sn-glycero-3-phospho-(1D-myo-inositol-3,5-bisphosphate) site. The a 1,2-diacyl-sn-glycero-3-phospho-(1D-myo-inositol-3-phosphate) site is built by N249, N274, and I275. Substrate is bound by residues 249-252, 274-275, and 335-341; these read NKVQ, NI, and CSDGWDR. The Phosphocysteine intermediate role is filled by C335. A 1,2-diacyl-sn-glycero-3-phospho-(1D-myo-inositol-3,5-bisphosphate)-binding residues include S336, D337, G338, W339, D340, R341, K377, and R381. A 1,2-diacyl-sn-glycero-3-phospho-(1D-myo-inositol-3-phosphate) contacts are provided by S336, D337, G338, W339, D340, and R341. R381 lines the a 1,2-diacyl-sn-glycero-3-phospho-(1D-myo-inositol-3-phosphate) pocket. R381 contributes to the substrate binding site. Residues 618–675 form an FYVE-type zinc finger; that stretch reads KWQPLRGADRCSNPACRGEFSSTIERRIHCHLCGMIFCRRCLKVSADERERVCDKCKT.

Belongs to the protein-tyrosine phosphatase family. Non-receptor class myotubularin subfamily. Heterodimer with mtm-9. As to expression, expressed in intestinal cells. Expressed in head neurons, pre-anal ganglion, hypodermal cells, anal depressor muscle and non-neuronal cells in the tail.

It is found in the cytoplasm. Its subcellular location is the membrane. The protein resides in the apical cell membrane. It carries out the reaction a 1,2-diacyl-sn-glycero-3-phospho-(1D-myo-inositol-3,5-bisphosphate) + H2O = a 1,2-diacyl-sn-glycero-3-phospho-(1D-myo-inositol-5-phosphate) + phosphate. The catalysed reaction is a 1,2-diacyl-sn-glycero-3-phospho-(1D-myo-inositol-3-phosphate) + H2O = a 1,2-diacyl-sn-glycero-3-phospho-(1D-myo-inositol) + phosphate. The enzyme catalyses 1,2-dioctanoyl-sn-glycero-3-phospho-(1D-myo-inositol-3,5-bisphosphate) + H2O = 1,2-dioctanoyl-sn-glycero-3-phospho-(1D-myo-inositol-5-phosphate) + phosphate. It catalyses the reaction 1,2-dioctanoyl-sn-glycero-3-phospho-(1-D-myo-inositol-3-phosphate) + H2O = 1,2-dioctanoyl-sn-glycero-3-phospho-(1D-myo-inositol) + phosphate. Its function is as follows. Probable lipid phosphatase that specifically dephosphorylates the D-3 position of phosphatidylinositol 3-phosphate and phosphatidylinositol 3,5-bisphosphate, generating phosphatidylinositol and phosphatidylinositol 5-phosphate. In association with mtm-9, plays a role in endosome trafficking probably by regulating phosphatidylinositol-3-phosphate levels. Regulates fluid phase endocytosis in coelomocytes. Controls the endosomal localization of sorting nexin snx-3 and the levels of sorting receptor mig-14. By regulating the retrograde transport of mig-14, may be involved in the secretion of Wnt ligands such as egl-20. Regulates posterior migration of QL neuroblast descendants and the anterior migration of QR neuroblast descendants and HSN neurons during larval development. Involved in the formation of correct synapse number in DA9 motor neurons probably in part by regulating the secretion of Wnt ligand egl-20. The protein is Phosphatidylinositol-3,5-bisphosphate 3-phosphatase MTMR6 of Caenorhabditis elegans.